The following is a 370-amino-acid chain: Homospermidine synthase (370 aa).

This sequence belongs to the deoxyhypusine synthase family. Homotetramer. It depends on NAD(+) as a cofactor.

It carries out the reaction putrescine + spermidine = sym-homospermidine + propane-1,3-diamine. It functions in the pathway alkaloid biosynthesis; pyrrolizidine alkaloid biosynthesis. Catalyzes the transfer of an aminobutyl unit from spermidine onto putrescine. The resulting polyamine homospermidine is a precursor in the biosynthesis of pyrrolizidine alkaloids. This chain is Homospermidine synthase (HSS1), found in Senecio vulgaris (Common groundsel).